The chain runs to 457 residues: Phosphoglucosamine mutase (457 aa).

The active-site Phosphoserine intermediate is the serine 106. Residues serine 106, aspartate 245, aspartate 247, and aspartate 249 each coordinate Mg(2+). Serine 106 carries the post-translational modification Phosphoserine.

This sequence belongs to the phosphohexose mutase family. Mg(2+) serves as cofactor. Activated by phosphorylation.

The enzyme catalyses alpha-D-glucosamine 1-phosphate = D-glucosamine 6-phosphate. Its function is as follows. Catalyzes the conversion of glucosamine-6-phosphate to glucosamine-1-phosphate. This Methylibium petroleiphilum (strain ATCC BAA-1232 / LMG 22953 / PM1) protein is Phosphoglucosamine mutase.